Here is a 301-residue protein sequence, read N- to C-terminus: uncharacterized protein (301 aa).

Residues 1–26 (MKGFSCSRPGYLTGLLLLAVAPILTA) form the signal peptide. Cys-27 is lipidated: N-palmitoyl cysteine. Residue Cys-27 is the site of S-diacylglycerol cysteine attachment. The 198-residue stretch at 46 to 243 (KLKPATIEYW…YNAKINIWSH (198 aa)) folds into the TNase-like domain. Residues 64-136 (NYASEERRKE…SKGDSTGDEK (73 aa)) are disordered. Basic and acidic residues-rich tracts occupy residues 67 to 95 (SEER…KTED) and 120 to 136 (TPEK…GDEK).

The protein resides in the cell membrane. This is an uncharacterized protein from Mycoplasma pneumoniae (strain ATCC 29342 / M129 / Subtype 1) (Mycoplasmoides pneumoniae).